The following is a 265-amino-acid chain: 4-hydroxy-tetrahydrodipicolinate reductase (265 aa).

NAD(+) is bound by residues 7 to 12, Asp-33, 96 to 98, and 120 to 123; these read GASGRM, GTT, and AANM. His-153 acts as the Proton donor/acceptor in catalysis. His-154 provides a ligand contact to (S)-2,3,4,5-tetrahydrodipicolinate. Residue Lys-157 is the Proton donor of the active site. Residue 163-164 coordinates (S)-2,3,4,5-tetrahydrodipicolinate; the sequence is GT.

The protein belongs to the DapB family.

It is found in the cytoplasm. The enzyme catalyses (S)-2,3,4,5-tetrahydrodipicolinate + NAD(+) + H2O = (2S,4S)-4-hydroxy-2,3,4,5-tetrahydrodipicolinate + NADH + H(+). It carries out the reaction (S)-2,3,4,5-tetrahydrodipicolinate + NADP(+) + H2O = (2S,4S)-4-hydroxy-2,3,4,5-tetrahydrodipicolinate + NADPH + H(+). Its pathway is amino-acid biosynthesis; L-lysine biosynthesis via DAP pathway; (S)-tetrahydrodipicolinate from L-aspartate: step 4/4. In terms of biological role, catalyzes the conversion of 4-hydroxy-tetrahydrodipicolinate (HTPA) to tetrahydrodipicolinate. In Cupriavidus metallidurans (strain ATCC 43123 / DSM 2839 / NBRC 102507 / CH34) (Ralstonia metallidurans), this protein is 4-hydroxy-tetrahydrodipicolinate reductase.